A 753-amino-acid chain; its full sequence is Putative cyclic nucleotide-gated ion channel 8 (753 aa).

Residues 1–111 (MYKSQYISGH…DKTLLLWNRM (111 aa)) are Cytoplasmic-facing. The helical transmembrane segment at 112–132 (FVISCILAVSVDPLFFYLPIV) threads the bilayer. Over 133 to 145 (DNSKNCIGIDSKL) the chain is Extracellular. A helical transmembrane segment spans residues 146 to 166 (AVTTTTLRTIIDVFYLTRMAL). Topologically, residues 167–199 (QFRTAYIAPSSRVFGRGELVIDPAKIAERYLTR) are cytoplasmic. A helical membrane pass occupies residues 200–220 (YFIVDFLAVLPLPQIAVWKFL). Topologically, residues 221-233 (HGSKGTDVLPTKQ) are extracellular. Residues 234–254 (ALLHIVITQYIPRFVRFIPLT) form a helical membrane-spanning segment. Residues 255–274 (SELKKTAGAFAEGAWAGAAY) are Cytoplasmic-facing. A helical transmembrane segment spans residues 275–295 (YLLWYMLASHITGAFWYMLSV). Topologically, residues 296–402 (ERNDTCLRSA…QGLQTSTYPG (107 aa)) are extracellular. Residues 403–423 (EVLFSIAIAVAGLLLFALLIG) form a helical membrane-spanning segment. At 424–753 (NMQTYLQSLT…FEALDTDDLN (330 aa)) the chain is on the cytoplasmic side. Residues 508-638 (LFAN…TFRF) and Glu-579 contribute to the a nucleoside 3',5'-cyclic phosphate site. A calmodulin-binding region spans residues 624–639 (FRRLHSRQVQQTFRFY). In terms of domain architecture, IQ spans 644 to 673 (RTWAACFIQAAWRRHLRRKIAELRRKEEEE). The interval 731–753 (KSLMNLTKPSEPDFEALDTDDLN) is disordered. Residues 742–753 (PDFEALDTDDLN) are compositionally biased toward acidic residues.

It belongs to the cyclic nucleotide-gated cation channel (TC 1.A.1.5) family. As to quaternary structure, homotetramer or heterotetramer.

The protein localises to the cell membrane. Putative cyclic nucleotide-gated ion channel. This Arabidopsis thaliana (Mouse-ear cress) protein is Putative cyclic nucleotide-gated ion channel 8 (CNGC8).